The following is a 247-amino-acid chain: Oocyte zinc finger protein XlCOF20 (247 aa).

C2H2-type zinc fingers lie at residues 6-28 (YDCRECGKRYTKRNNLYIHQRVH), 34-56 (FPCTECGKGFSHKSQLIIHQRVH), 62-84 (FICSECGKGFSKNYGLILHLRVH), 90-112 (FVCTECGQRFSKNNVLSMHQRVH), 118-140 (FTCTECGKRFSQKRQLNLHLRVH), 146-168 (FVCTECGKRFSKNDVLLIHLRVH), 174-196 (FMCADCGRCFSVSSSLKYHQRIC), and 225-247 (QSCAECGKCFSSNYNLSLHMRVH).

Belongs to the krueppel C2H2-type zinc-finger protein family.

The protein resides in the nucleus. In terms of biological role, may be involved in transcriptional regulation. This chain is Oocyte zinc finger protein XlCOF20, found in Xenopus laevis (African clawed frog).